The following is a 972-amino-acid chain: 116 kDa U5 small nuclear ribonucleoprotein component (972 aa).

Met-1 is subject to N-acetylmethionine. Residues 1 to 54 (MDTDLYDEFGNYIGPELDSDEDDDELGRETKDLDEMDDDDDDDDVGDHDDDHPG) form a disordered region. Acidic residues-rich tracts occupy residues 17 to 26 (LDSDEDDDEL) and 34 to 48 (DEMD…VGDH). Phosphoserine is present on Ser-19. A Glycyl lysine isopeptide (Lys-Gly) (interchain with G-Cter in SUMO1); alternate cross-link involves residue Lys-64. Lys-64 is covalently cross-linked (Glycyl lysine isopeptide (Lys-Gly) (interchain with G-Cter in SUMO2); alternate). Thr-86 is modified (phosphothreonine). Residues 127–409 (ELIRNVTLCG…GIHLTKEELK (283 aa)) form the tr-type G domain. GTP contacts are provided by residues 136–143 (GHLHHGKT), 204–208 (DTPGH), and 258–261 (NKID).

The protein belongs to the TRAFAC class translation factor GTPase superfamily. Classic translation factor GTPase family. EF-G/EF-2 subfamily. Component of the U5 snRNP and the U4/U6-U5 tri-snRNP complex, a building block of the spliceosome. The U4/U6-U5 tri-snRNP complex is composed of the U4, U6 and U5 snRNAs and at least PRPF3, PRPF4, PRPF6, PRPF8, PRPF31, SNRNP200, TXNL4A, SNRNP40, DDX23, CD2BP2, PPIH, SNU13, EFTUD2, SART1 and USP39. Component of the pre-catalytic, catalytic and post-catalytic spliceosome complexes. Component of the minor spliceosome, which splices U12-type introns. Within this complex, interacts with CRIPT. Interacts with ERBB4 and PRPF8. Interacts with PIH1D1. Interacts with RPAP3 and URI1 in a ZNHIT2-dependent manner. Interacts with NRDE2. Interacts with FAM50A. Interacts with UBL5.

The protein resides in the nucleus. Required for pre-mRNA splicing as component of the spliceosome, including pre-catalytic, catalytic and post-catalytic spliceosomal complexes. Component of the U5 snRNP and the U4/U6-U5 tri-snRNP complex, a building block of the spliceosome. As a component of the minor spliceosome, involved in the splicing of U12-type introns in pre-mRNAs. This is 116 kDa U5 small nuclear ribonucleoprotein component (EFTUD2) from Homo sapiens (Human).